Reading from the N-terminus, the 504-residue chain is Paired zinc finger protein 1 (504 aa).

C2H2-type zinc fingers lie at residues 12–35 and 39–62; these read LLCGICGKYFSDDESLREHRRQRH and HMCLLCNRRIPENETLREHMKNKH. The segment at 68-91 adopts a C2H2-type 3; degenerate zinc-finger fold; that stretch reads FICVCCNWSFGTEIYLKCHEECMK. Disordered regions lie at residues 115–136 and 154–173; these read ALNTDPQNGSDDVPHSSPSPVP and IESADRSSASTSTPRTLVSG. Positions 159–172 are enriched in polar residues; it reads RSSASTSTPRTLVS. C2H2-type zinc fingers lie at residues 179–202 and 206–229; these read IPCGFCGKDFFHEGSLREHRRRFH and HTCLLCNRQIPENETVRDHMKSQH. The segment at 235–258 adopts a C2H2-type 6; degenerate zinc-finger fold; that stretch reads YNCLCCNWTFLNQVHLISHKTCLK. A C2H2-type 7 zinc finger spans residues 309 to 332; sequence LSCKSCGKFFYSERSLSKHHRQIH. A C2H2-type 8; degenerate zinc finger spans residues 365–389; it reads FNCRCCNWSFATRRCLMSHVECLKK.

Expressed in proximal gonad.

Functionally, possible transcriptional regulator. Involved in promoting segregation of chromosomes during meiosis, perhaps acting downstream of the let-60 RAS / mpk-1 MAPK signaling pathway. This chain is Paired zinc finger protein 1, found in Caenorhabditis elegans.